Reading from the N-terminus, the 275-residue chain is Arylamine N-acetyltransferase (275 aa).

Cysteine 70 (acyl-thioester intermediate) is an active-site residue. Catalysis depends on residues histidine 110 and aspartate 127.

The protein belongs to the arylamine N-acetyltransferase family. As to quaternary structure, homodimer and homotetramer.

The enzyme catalyses an arylamine + acetyl-CoA = an N-acetylarylamine + CoA. Functionally, catalyzes the transfer of the acetyl group from acetyl coenzyme A to the free amino group of arylamines and hydrazines. Substrates include isoniazid, anisidine, and 4-aminoveratrole, and to a much lesser extent, p-aminobenzoic acid. The polypeptide is Arylamine N-acetyltransferase (Mycolicibacterium smegmatis (Mycobacterium smegmatis)).